The chain runs to 253 residues: Triosephosphate isomerase (253 aa).

Substrate contacts are provided by Asn12 and Lys14. His96 functions as the Electrophile in the catalytic mechanism. The active-site Proton acceptor is the Glu169.

Belongs to the triosephosphate isomerase family. As to quaternary structure, homodimer.

The protein localises to the cytoplasm. It carries out the reaction D-glyceraldehyde 3-phosphate = dihydroxyacetone phosphate. The protein operates within carbohydrate biosynthesis; gluconeogenesis. It functions in the pathway carbohydrate degradation; glycolysis; D-glyceraldehyde 3-phosphate from glycerone phosphate: step 1/1. Antigen to the host M.1 monoclonal antibody. This chain is Triosephosphate isomerase (TPI), found in Schistosoma mansoni (Blood fluke).